Consider the following 453-residue polypeptide: Na(+)/H(+) antiporter NhaA (453 aa).

The next 11 helical transmembrane spans lie at 27–47 (FLHIEALSGIVLLLAAASALI), 78–98 (LHFWVNDALMTIFFLVAGMEI), 114–134 (ILPIVAAIGGVCVPAIIYFIF), 143–163 (GWAVPTATDIAFALGILALLG), 172–192 (IILLSLAIIDDIIAVLIIAFF), 201–221 (GLLIAGGGIALVLFFQWIGLA), 222–242 (SAWLYILPGAIIWWGLMVTGV), 316–336 (PWVAYGIMPVFAFANAGVSFA), 346–366 (FLIVFGVVIGLFVGKPLGIIT), 385–405 (WAGILLIGFLAGIGFTMSIFV), and 421–441 (IGVLCGSGLSALIGLGYGFIY).

The protein belongs to the NhaA Na(+)/H(+) (TC 2.A.33) antiporter family.

Its subcellular location is the cell inner membrane. The catalysed reaction is Na(+)(in) + 2 H(+)(out) = Na(+)(out) + 2 H(+)(in). Functionally, na(+)/H(+) antiporter that extrudes sodium in exchange for external protons. In Bartonella tribocorum (strain CIP 105476 / IBS 506), this protein is Na(+)/H(+) antiporter NhaA.